Consider the following 274-residue polypeptide: NADPH-dependent 7-cyano-7-deazaguanine reductase (274 aa).

80 to 82 (VES) is a binding site for substrate. 82–83 (SK) lines the NADPH pocket. The active-site Thioimide intermediate is Cys181. Asp188 serves as the catalytic Proton donor. 220–221 (HE) contacts substrate. 249–250 (RG) serves as a coordination point for NADPH.

Belongs to the GTP cyclohydrolase I family. QueF type 2 subfamily. In terms of assembly, homodimer.

It is found in the cytoplasm. It carries out the reaction 7-aminomethyl-7-carbaguanine + 2 NADP(+) = 7-cyano-7-deazaguanine + 2 NADPH + 3 H(+). It participates in tRNA modification; tRNA-queuosine biosynthesis. In terms of biological role, catalyzes the NADPH-dependent reduction of 7-cyano-7-deazaguanine (preQ0) to 7-aminomethyl-7-deazaguanine (preQ1). This chain is NADPH-dependent 7-cyano-7-deazaguanine reductase, found in Burkholderia ambifaria (strain ATCC BAA-244 / DSM 16087 / CCUG 44356 / LMG 19182 / AMMD) (Burkholderia cepacia (strain AMMD)).